A 159-amino-acid chain; its full sequence is MRIGHGFDVHAFGGEGPIIIGGVRIPYEKGLLAHSDGDVALHALTDALLGAAALGDIGKLFPDTDPAFKGADSRELLREAWRRIQAKGYTLGNVDVTIIAQAPKMLPHIPQMRVFIAEDLGCHMDDVNVKATTTEKLGFTGRGEGIACEAVALLRKADK.

Positions 8 and 10 each coordinate a divalent metal cation. 4-CDP-2-C-methyl-D-erythritol 2-phosphate contacts are provided by residues 8 to 10 (DVH) and 34 to 35 (HS). Residue H42 coordinates a divalent metal cation. 4-CDP-2-C-methyl-D-erythritol 2-phosphate contacts are provided by residues 56-58 (DIG), 61-65 (FPDTD), 100-106 (AQAPKML), 132-135 (TTTE), F139, and R142.

The protein belongs to the IspF family. Homotrimer. A divalent metal cation is required as a cofactor.

The catalysed reaction is 4-CDP-2-C-methyl-D-erythritol 2-phosphate = 2-C-methyl-D-erythritol 2,4-cyclic diphosphate + CMP. It functions in the pathway isoprenoid biosynthesis; isopentenyl diphosphate biosynthesis via DXP pathway; isopentenyl diphosphate from 1-deoxy-D-xylulose 5-phosphate: step 4/6. Involved in the biosynthesis of isopentenyl diphosphate (IPP) and dimethylallyl diphosphate (DMAPP), two major building blocks of isoprenoid compounds. Catalyzes the conversion of 4-diphosphocytidyl-2-C-methyl-D-erythritol 2-phosphate (CDP-ME2P) to 2-C-methyl-D-erythritol 2,4-cyclodiphosphate (ME-CPP) with a corresponding release of cytidine 5-monophosphate (CMP). In Klebsiella pneumoniae subsp. pneumoniae (strain ATCC 700721 / MGH 78578), this protein is 2-C-methyl-D-erythritol 2,4-cyclodiphosphate synthase.